A 1185-amino-acid polypeptide reads, in one-letter code: DNA-directed RNA polymerase subunit beta' (1185 aa).

Residues Cys-67, Cys-69, Cys-82, and Cys-85 each contribute to the Zn(2+) site. Mg(2+) contacts are provided by Asp-457, Asp-459, and Asp-461. Zn(2+)-binding residues include Cys-802, Cys-876, Cys-883, and Cys-886.

Belongs to the RNA polymerase beta' chain family. The RNAP catalytic core consists of 2 alpha, 1 beta, 1 beta' and 1 omega subunit. When a sigma factor is associated with the core the holoenzyme is formed, which can initiate transcription. Mg(2+) serves as cofactor. Requires Zn(2+) as cofactor.

It catalyses the reaction RNA(n) + a ribonucleoside 5'-triphosphate = RNA(n+1) + diphosphate. Functionally, DNA-dependent RNA polymerase catalyzes the transcription of DNA into RNA using the four ribonucleoside triphosphates as substrates. This Clostridium novyi (strain NT) protein is DNA-directed RNA polymerase subunit beta'.